We begin with the raw amino-acid sequence, 446 residues long: Maltoporin (446 aa).

An N-terminal signal peptide occupies residues 1–25 (MMITLRKLPLAVAVAAGVMSAQAMA).

This sequence belongs to the porin LamB (TC 1.B.3) family. In terms of assembly, homotrimer formed of three 18-stranded antiparallel beta-barrels, containing three independent channels.

The protein resides in the cell outer membrane. The enzyme catalyses beta-maltose(in) = beta-maltose(out). In terms of biological role, involved in the transport of maltose and maltodextrins. This Escherichia coli O8 (strain IAI1) protein is Maltoporin.